The primary structure comprises 504 residues: Glycerol kinase (504 aa).

Residue threonine 12 participates in ADP binding. ATP contacts are provided by threonine 12, threonine 13, and serine 14. Threonine 12 serves as a coordination point for sn-glycerol 3-phosphate. Arginine 16 serves as a coordination point for ADP. Sn-glycerol 3-phosphate contacts are provided by arginine 82, glutamate 83, tyrosine 134, and aspartate 249. Glycerol is bound by residues arginine 82, glutamate 83, tyrosine 134, aspartate 249, and glutamine 250. The ADP site is built by threonine 271 and glycine 315. ATP contacts are provided by threonine 271, glycine 315, glutamine 319, and glycine 416. Residues glycine 416 and asparagine 420 each contribute to the ADP site.

Belongs to the FGGY kinase family.

The enzyme catalyses glycerol + ATP = sn-glycerol 3-phosphate + ADP + H(+). The protein operates within polyol metabolism; glycerol degradation via glycerol kinase pathway; sn-glycerol 3-phosphate from glycerol: step 1/1. Inhibited by fructose 1,6-bisphosphate (FBP). Its function is as follows. Key enzyme in the regulation of glycerol uptake and metabolism. Catalyzes the phosphorylation of glycerol to yield sn-glycerol 3-phosphate. The polypeptide is Glycerol kinase (Mycobacteroides abscessus (strain ATCC 19977 / DSM 44196 / CCUG 20993 / CIP 104536 / JCM 13569 / NCTC 13031 / TMC 1543 / L948) (Mycobacterium abscessus)).